Here is a 130-residue protein sequence, read N- to C-terminus: Sirohydrochlorin cobaltochelatase (130 aa).

Catalysis depends on H12, which acts as the Proton acceptor. H12 serves as a coordination point for Co(2+). H12 lines the Ni(2+) pocket. Residues E48 and 73–78 (LASGVH) each bind substrate. H78 is a binding site for Co(2+). H78 lines the Ni(2+) pocket.

Belongs to the CbiX family. CbiXS subfamily. Homotetramer; dimer of dimers.

The enzyme catalyses Co-sirohydrochlorin + 2 H(+) = sirohydrochlorin + Co(2+). It catalyses the reaction Ni-sirohydrochlorin + 2 H(+) = sirohydrochlorin + Ni(2+). It functions in the pathway cofactor biosynthesis; adenosylcobalamin biosynthesis; cob(II)yrinate a,c-diamide from sirohydrochlorin (anaerobic route): step 1/10. Its function is as follows. Catalyzes the insertion of Co(2+) into sirohydrochlorin as part of the anaerobic pathway to cobalamin biosynthesis. Involved in the biosynthesis of the unique nickel-containing tetrapyrrole coenzyme F430, the prosthetic group of methyl-coenzyme M reductase (MCR), which plays a key role in methanogenesis and anaerobic methane oxidation. Catalyzes the insertion of Ni(2+) into sirohydrochlorin to yield Ni-sirohydrochlorin. This Methanosarcina barkeri (strain Fusaro / DSM 804) protein is Sirohydrochlorin cobaltochelatase.